Reading from the N-terminus, the 280-residue chain is MANAPRILALGLLALLCAAAGPAAAQNCGCQPNFCCSKFGYCGTTDAYCGDGCQSGPCRSGGGGGGGGGGGGGGSGGANVANVVTDAFFNGIKNQAGSGCEGKNFYTRSAFLSAVNAYPGFAHGGTEVEGKREIAAFFAHVTHETGHFCYISEINKSNAYCDASNRQWPCAAGQKYYGRGPLQISWNYNYGPAGRDIGFNGLADPNRVAQDAVIAFKTALWFWMNNVHRVMPQGFGATIRAINGALECNGNNPAQMNARVGYYKQYCQQLRVDPGPNLTC.

Positions 1–25 (MANAPRILALGLLALLCAAAGPAAA) are cleaved as a signal peptide. The 35-residue stretch at 26–60 (QNCGCQPNFCCSKFGYCGTTDAYCGDGCQSGPCRS) folds into the Chitin-binding type-1 domain. 4 cysteine pairs are disulfide-bonded: Cys28–Cys36, Cys30–Cys42, Cys35–Cys49, and Cys53–Cys58. The tract at residues 61–77 (GGGGGGGGGGGGGGSGG) is hinge region (poly-Gly). The catalytic stretch occupies residues 78-280 (ANVANVVTDA…RVDPGPNLTC (203 aa)). Cysteines 100 and 149 form a disulfide. The active-site Proton donor is the Glu144. Asn155 carries an N-linked (GlcNAc...) asparagine glycan. 2 cysteine pairs are disulfide-bonded: Cys161–Cys170 and Cys248–Cys280. N-linked (GlcNAc...) asparagine glycosylation is present at Asn277.

This sequence belongs to the glycosyl hydrolase 19 family. Chitinase class IV subfamily.

The protein resides in the secreted. The catalysed reaction is Random endo-hydrolysis of N-acetyl-beta-D-glucosaminide (1-&gt;4)-beta-linkages in chitin and chitodextrins.. Inactivated by l-ethyl-3-(3-dimethylaminopropyl)carbodiimide (EDC) in the absence of exogenous nucleophiles (e.g. GlcNAc4, GlcNAc3 and GlcNAc2). Not inhibited by tetra-N-acetylchitopentaose or modified chitotetraose substrate TMG-chitotriomycin-pMP, containing a free, non-acetylated glucosaminyl residue or a N-trimethylamino glucosamine (TMG) residue at the non-reducing terminus, respectively. Its function is as follows. Defense against chitin-containing fungal pathogens. Hydrolyzes glycol chitin and tetra-N-acetylchitotetraose in vitro. Its action is countered by fungal polyglycine hydrolases and fungalysin, that cleave the chitin-binding domain from the protein. The polypeptide is Endochitinase A (Zea mays (Maize)).